The primary structure comprises 346 residues: NADH-ubiquinone oxidoreductase chain 2 (346 aa).

Transmembrane regions (helical) follow at residues 1–21 (MNPH…TITI), 25–45 (HWVL…PLIS), 60–80 (FLTQ…NAWA), 95–115 (CLLL…HFWF), 124–144 (LMTA…LLLM), 149–169 (LNPA…GWMG), 178–195 (ILAF…IILV), 200–219 (LALL…FMAL), 242–262 (ATLM…GFMP), 274–294 (EMTP…FFYL), and 326–346 (AILA…HAIV).

The protein belongs to the complex I subunit 2 family.

Its subcellular location is the mitochondrion inner membrane. It carries out the reaction a ubiquinone + NADH + 5 H(+)(in) = a ubiquinol + NAD(+) + 4 H(+)(out). In terms of biological role, core subunit of the mitochondrial membrane respiratory chain NADH dehydrogenase (Complex I) that is believed to belong to the minimal assembly required for catalysis. Complex I functions in the transfer of electrons from NADH to the respiratory chain. The immediate electron acceptor for the enzyme is believed to be ubiquinone. This chain is NADH-ubiquinone oxidoreductase chain 2 (MT-ND2), found in Mareca falcata (Falcated duck).